A 177-amino-acid polypeptide reads, in one-letter code: Novel acetylcholine receptor chaperone (177 aa).

At 1-5 (MASPR) the chain is on the cytoplasmic side. A helical membrane pass occupies residues 6–26 (TVTVVALSVALGLFFVFMGTI). Topologically, residues 27–61 (KLTPRLSKDAYSEMKRAYKSYVRALPLLKKMGINS) are lumenal. The segment at 43–54 (AYKSYVRALPLL) is interaction with NGFR. The chain crosses the membrane as a helical span at residues 62–82 (ILLRKSIGALEVACGIVMTLV). Over 83–88 (PGRPKD) the chain is Cytoplasmic. A helical membrane pass occupies residues 89 to 109 (VANFFLLLLVLAVLFFHQLVG). Over 110-114 (DPLKR) the chain is Lumenal. A helical transmembrane segment spans residues 115-132 (YAHALVFGILLTCRLLIA). Over 133–177 (RKPEDRSSEKKSSPPGNAGSDGNAGNTEEQPSLYEKAPQGKMKLS) the chain is Cytoplasmic. A disordered region spans residues 136–177 (EDRSSEKKSSPPGNAGSDGNAGNTEEQPSLYEKAPQGKMKLS).

It belongs to the DoxX family. May interact with NGFR. Interacts with RPN1, RPN2 and CANX.

The protein resides in the peroxisome membrane. The protein localises to the cytoplasmic vesicle. It localises to the endoplasmic reticulum membrane. Molecular chaperone which mediates the proper assembly and functional expression of the nicotinic acetylcholine receptors (nAChRs) throughout the brain. Essential for the proper folding, assembly, function and surface trafficking of alpha-7 (CHRNA7), alpha-4-beta-2, alpha-3-beta-2 and alpha-3-beta-4 receptors. Stably associates with ribophorin-1 (RPN1) and ribophorin-2 (RPN2) (components of the oligosaccharyl transferase (OST) complex) and with calnexin (CANX), both of which are critical for NACHO-mediated effects on CHRNA7 assembly and function. Facilitates the proper folding and assembly of alpha-6-beta-2 and alpha-6-beta-2-beta-3 receptors and acts at early stages of the nAChRs subunit assembly. Promotes the expression of the alpha-4(2):beta-2(3) stoichiometric form over the alpha-4(3):beta-2(2) form. The polypeptide is Novel acetylcholine receptor chaperone (TMEM35A) (Bos taurus (Bovine)).